Consider the following 263-residue polypeptide: Inner membrane protein YpjD (263 aa).

At methionine 1–valine 3 the chain is on the periplasmic side. Residues phenylalanine 4–leucine 23 form a helical membrane-spanning segment. Over leucine 24 to alanine 34 the chain is Cytoplasmic. Residues isoleucine 35–leucine 54 traverse the membrane as a helical segment. At proline 55–leucine 63 the chain is on the periplasmic side. Residues serine 64–valine 83 form a helical membrane-spanning segment. Over alanine 84–glycine 89 the chain is Cytoplasmic. A helical membrane pass occupies residues tryptophan 90–phenylalanine 109. Residues methionine 110–glycine 123 are Periplasmic-facing. Residues methionine 124–leucine 146 form a helical membrane-spanning segment. At glutamine 147 to glutamine 181 the chain is on the cytoplasmic side. A helical transmembrane segment spans residues isoleucine 182–leucine 201. Topologically, residues phenylalanine 202 to alanine 210 are periplasmic. A helical membrane pass occupies residues valine 211–tyrosine 228. The Cytoplasmic segment spans residues histidine 229–arginine 236. A helical transmembrane segment spans residues valine 237–glutamine 259. The Periplasmic portion of the chain corresponds to glutamine 260–serine 263.

It is found in the cell inner membrane. The polypeptide is Inner membrane protein YpjD (ypjD) (Escherichia coli O157:H7).